The chain runs to 364 residues: Homeobox protein KNOX3 (364 aa).

Residues 13-49 (TAHGQHHSQLPWGSSPLSAVISPPPQQQQQHQQQSAG) form a disordered region. Over residues 19–29 (HSQLPWGSSPL) the composition is skewed to polar residues. The ELK domain occupies 246–266 (ELKHHLLKKYSGYLSSLKQEL). Positions 267-330 (SKKKKKGKLP…NQRKRHWKPT (64 aa)) form a DNA-binding region, homeobox; TALE-type.

Belongs to the TALE/KNOX homeobox family. In terms of assembly, binds DNA as a monomer. In terms of tissue distribution, the unit of inflorescence is the spikelet, which bears a fertile tract, the lemma, and the floret consisting of palea, two lodicules, three stamens and the pistil. The lemma is completed by the awn, an appendage homologous to the laminae of normal leaves. Expressed in the inflorescences and lemmas and at lower levels, in palea and vascular bundles.

The protein localises to the nucleus. May play a role in meristem formation and/or maintenance. Overexpression causes the hooded phenotype characterized by the appearance of an extra flower of inverse polarity on the lemma. Binds to the DNA sequence 5'-TGAC-3'. In Hordeum vulgare (Barley), this protein is Homeobox protein KNOX3 (KNOX3).